The chain runs to 145 residues: Large ribosomal subunit protein uL13 (145 aa).

This sequence belongs to the universal ribosomal protein uL13 family. In terms of assembly, part of the 50S ribosomal subunit.

Its function is as follows. This protein is one of the early assembly proteins of the 50S ribosomal subunit, although it is not seen to bind rRNA by itself. It is important during the early stages of 50S assembly. In Bacillus pumilus (strain SAFR-032), this protein is Large ribosomal subunit protein uL13.